The chain runs to 409 residues: Na(+)-translocating NADH-quinone reductase subunit F (409 aa).

A helical membrane pass occupies residues 5–25 (FIFGIIAFTALVLVLAVIILF). The 95-residue stretch at 34–128 (GDITISINND…SMDVELPEEI (95 aa)) folds into the 2Fe-2S ferredoxin-type domain. 4 residues coordinate [2Fe-2S] cluster: Cys71, Cys77, Cys80, and Cys112. The 141-residue stretch at 131-271 (VKKWECTVIS…SGPFGEFFAK (141 aa)) folds into the FAD-binding FR-type domain.

It belongs to the NqrF family. Composed of six subunits; NqrA, NqrB, NqrC, NqrD, NqrE and NqrF. [2Fe-2S] cluster serves as cofactor. FAD is required as a cofactor.

The protein localises to the cell inner membrane. It carries out the reaction a ubiquinone + n Na(+)(in) + NADH + H(+) = a ubiquinol + n Na(+)(out) + NAD(+). Its function is as follows. NQR complex catalyzes the reduction of ubiquinone-1 to ubiquinol by two successive reactions, coupled with the transport of Na(+) ions from the cytoplasm to the periplasm. The first step is catalyzed by NqrF, which accepts electrons from NADH and reduces ubiquinone-1 to ubisemiquinone by a one-electron transfer pathway. This is Na(+)-translocating NADH-quinone reductase subunit F from Actinobacillus pleuropneumoniae serotype 5b (strain L20).